The sequence spans 225 residues: Pathogenesis-related thaumatin-like protein 3.8 (225 aa).

Residues 1–26 (MAKVSDLALLLVAGMAISLYIQETGA) form the signal peptide. Cystine bridges form between Cys35–Cys224, Cys76–Cys86, Cys91–Cys97, Cys139–Cys213, Cys144–Cys197, Cys152–Cys162, Cys166–Cys175, and Cys176–Cys184. A glycan (N-linked (GlcNAc...) asparagine) is linked at Asn188.

The protein belongs to the thaumatin family.

Functionally, may be involved in disease resistance. The chain is Pathogenesis-related thaumatin-like protein 3.8 from Cryptomeria japonica (Japanese cedar).